An 801-amino-acid polypeptide reads, in one-letter code: Bromodomain-containing protein 2 (801 aa).

N-acetylmethionine is present on methionine 1. Residue threonine 6 is modified to Phosphothreonine. At serine 37 the chain carries Phosphoserine. The disordered stretch occupies residues 53–73; the sequence is ALQLTPANPPPPEVSNPKKPG. Residues 74 to 180 enclose the Bromo 1 domain; that stretch reads RVTNQLQYLH…KIFLQKVASM (107 aa). 6 residues coordinate a protein: aspartate 112, tyrosine 155, asparagine 156, lysine 157, aspartate 160, and aspartate 161. Disordered stretches follow at residues 268–349, 456–647, and 737–801; these read PPAQ…LSEQ, EPLE…YDEK, and EKRL…SDSG. Positions 285–298 are enriched in low complexity; that stretch reads TTTPTPTAILAPGS. Phosphoserine occurs at positions 298, 301, and 305. Residues 316–332 show a composition bias toward basic and acidic residues; that stretch reads MRRESGRPIKPPRKDLP. In terms of domain architecture, Bromo 2 spans 344–453; that stretch reads GKLSEQLKHC…DVFEFRYAKM (110 aa). The span at 481–514 shows a compositional bias: acidic residues; the sequence is SSEESSSESSSEEEEEEDEEDEEEEESESSDSEE. Residues 544–566 are compositionally biased toward basic residues; it reads KPKRKREKKEKKKKRKAEKHRGR. Residues 555 to 559 carry the Nuclear localization signal motif; that stretch reads KKKRK. Positions 592–612 are enriched in gly residues; that stretch reads GSGGGSAALGPSGFGPSGGSG. An NET domain is found at 632–714; that stretch reads DSEEEEESRP…SCLRKKPRKP (83 aa). Serine 633 carries the phosphoserine modification. The segment covering 763 to 795 has biased composition (low complexity); sequence SSSAQQVAVSRLSASSSSSDSSSSSSSSSSSDT.

Belongs to the BET family. Homodimer. Interacts with E2F1. Interacts with (acetylated) STAT3; promoting STAT3 recruitment to chromatin. Interacts with CTCF; promoting BRD2 recruitment to chromatin. As to quaternary structure, (Microbial infection) Interacts with herpes virus 8 protein LANA1.

Its subcellular location is the nucleus. It is found in the chromosome. Inhibited by JQ1, a thieno-triazolo-1,4-diazepine derivative, which specifically inhibits members of the BET family (BRD2, BRD3 and BRD4). The first bromo domain is inhibited by GSK778 (iBET-BD1), which specifically inhibits the first bromo domain of members of the BET family (BRD2, BRD3 and BRD4). The second bromo domain is inhibited by ABBV-744, which specifically inhibits the second bromo domain of members of the BET family (BRD2, BRD3 and BRD4). The second bromo domain is inhibited by GSK046 (iBET-BD2), which specifically inhibits the second bromo domain of members of the BET family (BRD2, BRD3 and BRD4). Chromatin reader protein that specifically recognizes and binds histone H4 acetylated at 'Lys-5' and 'Lys-12' (H4K5ac and H4K12ac, respectively), thereby controlling gene expression and remodeling chromatin structures. Recruits transcription factors and coactivators to target gene sites, and activates RNA polymerase II machinery for transcriptional elongation. Plays a key role in genome compartmentalization via its association with CTCF and cohesin: recruited to chromatin by CTCF and promotes formation of topologically associating domains (TADs) via its ability to bind acetylated histones, contributing to CTCF boundary formation and enhancer insulation. Also recognizes and binds acetylated non-histone proteins, such as STAT3. Involved in inflammatory response by regulating differentiation of naive CD4(+) T-cells into T-helper Th17: recognizes and binds STAT3 acetylated at 'Lys-87', promoting STAT3 recruitment to chromatin. In addition to acetylated lysines, also recognizes and binds lysine residues on histones that are both methylated and acetylated on the same side chain to form N6-acetyl-N6-methyllysine (Kacme), an epigenetic mark of active chromatin associated with increased transcriptional initiation. Specifically binds histone H4 acetyl-methylated at 'Lys-5' and 'Lys-12' (H4K5acme and H4K12acme, respectively). The sequence is that of Bromodomain-containing protein 2 from Homo sapiens (Human).